Reading from the N-terminus, the 492-residue chain is Nuclear autoantigenic sperm protein homolog (492 aa).

The span at 1–14 (MSAEAEAIVTTATA) shows a compositional bias: low complexity. Disordered stretches follow at residues 1 to 52 (MSAE…EQER) and 123 to 254 (DVPD…EEGV). A phosphothreonine mark is found at Thr-32 and Thr-33. Over residues 124–145 (VPDEAADDDDEDVDDDEEESAE) the composition is skewed to acidic residues. Basic and acidic residues-rich tracts occupy residues 147-159 (GAAKKEEKKDTKE) and 170-179 (KELDTIKEGS). Ser-179 and Ser-184 each carry phosphoserine. Thr-185 carries the phosphothreonine modification. Position 193 is a phosphoserine (Ser-193). A compositionally biased stretch (polar residues) spans 226–238 (STSNGEVTASCSN). Acidic residues predominate over residues 244–253 (VEEEPEEEEG). TPR repeat units lie at residues 284 to 317 (AEVQTELANIEFENGILEAAREDYEKALKIHGEL) and 326 to 359 (AELHYKIGLTYLMQQLNKEGATALRQSSVLIEEE). Residues 377–400 (MLDLEETKQEILAKIQEIEEMQAQ) adopt a coiled-coil conformation. Residues 418 to 459 (SGDAAAASSSSSSSANGAASSSSSSSKGAAAASSSTISSSSA) are compositionally biased toward low complexity. The interval 418-492 (SGDAAAASSS…LCSPAKRAAV (75 aa)) is disordered. Residues Ser-478 and Ser-485 each carry the phosphoserine modification.

It belongs to the NASP family. Interacts with the histone H3-H4 heterodimer; the interaction with H4 is probably indirect and mediated by H3 (His3, His3.3A and His3.3B). Interacts with His2Av; this interaction directly or indirectly destabilizes His2Av.

The protein localises to the cytoplasm. It localises to the nucleus. It is found in the perinuclear region. Its function is as follows. Component of the histone chaperone network. Binds and stabilizes histone H3-H4 not bound to chromatin to maintain a soluble reservoir and modulate degradation by chaperone-mediated autophagy. May also bind and stabilize monomeric H3. Maternal effect gene essential for early embryogenesis. The sequence is that of Nuclear autoantigenic sperm protein homolog from Drosophila melanogaster (Fruit fly).